Here is a 234-residue protein sequence, read N- to C-terminus: Small ribosomal subunit protein uS3 (234 aa).

The 69-residue stretch at 39 to 107 (IRKMLKERLK…EVHLNLVEVR (69 aa)) folds into the KH type-2 domain. The segment covering 215 to 227 (QERRLQESGEQRA) has biased composition (basic and acidic residues). Residues 215–234 (QERRLQESGEQRARSGRQAA) form a disordered region.

This sequence belongs to the universal ribosomal protein uS3 family. Part of the 30S ribosomal subunit. Forms a tight complex with proteins S10 and S14.

Functionally, binds the lower part of the 30S subunit head. Binds mRNA in the 70S ribosome, positioning it for translation. This chain is Small ribosomal subunit protein uS3, found in Maricaulis maris (strain MCS10) (Caulobacter maris).